Consider the following 467-residue polypeptide: Asparagine--tRNA ligase (467 aa).

It belongs to the class-II aminoacyl-tRNA synthetase family. As to quaternary structure, homodimer.

The protein resides in the cytoplasm. It carries out the reaction tRNA(Asn) + L-asparagine + ATP = L-asparaginyl-tRNA(Asn) + AMP + diphosphate + H(+). The sequence is that of Asparagine--tRNA ligase from Haemophilus ducreyi (strain 35000HP / ATCC 700724).